We begin with the raw amino-acid sequence, 100 residues long: Aspartyl/glutamyl-tRNA(Asn/Gln) amidotransferase subunit C (100 aa).

Belongs to the GatC family. As to quaternary structure, heterotrimer of A, B and C subunits.

It catalyses the reaction L-glutamyl-tRNA(Gln) + L-glutamine + ATP + H2O = L-glutaminyl-tRNA(Gln) + L-glutamate + ADP + phosphate + H(+). It carries out the reaction L-aspartyl-tRNA(Asn) + L-glutamine + ATP + H2O = L-asparaginyl-tRNA(Asn) + L-glutamate + ADP + phosphate + 2 H(+). In terms of biological role, allows the formation of correctly charged Asn-tRNA(Asn) or Gln-tRNA(Gln) through the transamidation of misacylated Asp-tRNA(Asn) or Glu-tRNA(Gln) in organisms which lack either or both of asparaginyl-tRNA or glutaminyl-tRNA synthetases. The reaction takes place in the presence of glutamine and ATP through an activated phospho-Asp-tRNA(Asn) or phospho-Glu-tRNA(Gln). This chain is Aspartyl/glutamyl-tRNA(Asn/Gln) amidotransferase subunit C, found in Dictyoglomus turgidum (strain DSM 6724 / Z-1310).